The primary structure comprises 1343 residues: Kinesin-like protein KIF7 (1343 aa).

Residues 15-349 (PVRVALRVRP…LNYASRAQNI (335 aa)) enclose the Kinesin motor domain. 94 to 101 (GQTGSGKT) provides a ligand contact to ATP. Disordered regions lie at residues 356–382 (NWRP…RSET), 451–483 (RSAL…RKED), and 611–639 (EVNR…TLHL). Residues 358–479 (RPEAERPPEE…EDQAAQGAGG (122 aa)) form an interaction with DLG5 region. Residues 358-1206 (RPEAERPPEE…LGRYMWINQE (849 aa)) form an interaction with SMO region. Residues 480-542 (RKEDEGAQQL…ELRLRLELVR (63 aa)) are a coiled coil. A sufficient for interaction with NPHP1 region spans residues 513-775 (AMEQYKLQSD…LRELEGKELQ (263 aa)). 2 coiled-coil regions span residues 698–1057 (ASEW…AAIE) and 1109–1211 (TLRE…KQKL). The residue at position 898 (Ser898) is a Phosphoserine. 2 disordered regions span residues 1219 to 1238 (HSRG…APGN) and 1310 to 1343 (GEAG…KNPL).

The protein belongs to the TRAFAC class myosin-kinesin ATPase superfamily. Kinesin family. KIF27 subfamily. Can form homodimers and interacts with microtubules. Interacts with GLI1, GLI2, GLI3, SMO and SUFU. Interacts with NPHP1. Interacts with SMO and DLG5 (via PDZ4 or guanylate kinase-like domain). Polyubiquitinated by UBR3. In terms of tissue distribution, embryonic stem cells, melanotic melanoma and Jurkat T-cells. Expressed in heart, lung, liver, kidney, testis, retina, placenta, pancreas, colon, small intestin, prostate and thymus.

The protein resides in the cell projection. The protein localises to the cilium. It is found in the cytoplasm. Its subcellular location is the cytoskeleton. It localises to the cilium basal body. In terms of biological role, essential for hedgehog signaling regulation: acts both as a negative and positive regulator of sonic hedgehog (Shh) and Indian hedgehog (Ihh) pathways, acting downstream of SMO, through both SUFU-dependent and -independent mechanisms. Involved in the regulation of microtubular dynamics. Required for proper organization of the ciliary tip and control of ciliary localization of SUFU-GLI2 complexes. Required for localization of GLI3 to cilia in response to Shh. Negatively regulates Shh signaling by preventing inappropriate activation of the transcriptional activator GLI2 in the absence of ligand. Positively regulates Shh signaling by preventing the processing of the transcription factor GLI3 into its repressor form. In keratinocytes, promotes the dissociation of SUFU-GLI2 complexes, GLI2 nuclear translocation and Shh signaling activation. Involved in the regulation of epidermal differentiation and chondrocyte development. The chain is Kinesin-like protein KIF7 (KIF7) from Homo sapiens (Human).